Reading from the N-terminus, the 212-residue chain is Phosphoribosylglycinamide formyltransferase (212 aa).

12–14 is a binding site for N(1)-(5-phospho-beta-D-ribosyl)glycinamide; the sequence is GTN. (6R)-10-formyltetrahydrofolate-binding positions include 90-93 and N107; that span reads MKIL. The Proton donor role is filled by H109.

This sequence belongs to the GART family.

The enzyme catalyses N(1)-(5-phospho-beta-D-ribosyl)glycinamide + (6R)-10-formyltetrahydrofolate = N(2)-formyl-N(1)-(5-phospho-beta-D-ribosyl)glycinamide + (6S)-5,6,7,8-tetrahydrofolate + H(+). It participates in purine metabolism; IMP biosynthesis via de novo pathway; N(2)-formyl-N(1)-(5-phospho-D-ribosyl)glycinamide from N(1)-(5-phospho-D-ribosyl)glycinamide (10-formyl THF route): step 1/1. Its function is as follows. Catalyzes the transfer of a formyl group from 10-formyltetrahydrofolate to 5-phospho-ribosyl-glycinamide (GAR), producing 5-phospho-ribosyl-N-formylglycinamide (FGAR) and tetrahydrofolate. This Haemophilus influenzae (strain ATCC 51907 / DSM 11121 / KW20 / Rd) protein is Phosphoribosylglycinamide formyltransferase.